We begin with the raw amino-acid sequence, 369 residues long: Arsenite methyltransferase (369 aa).

Position 46 is a phosphoserine (S46).

Belongs to the methyltransferase superfamily. Arsenite methyltransferase family.

The protein resides in the cytoplasm. Its subcellular location is the cytosol. The catalysed reaction is arsenic triglutathione + [thioredoxin]-dithiol + S-adenosyl-L-methionine + 2 H2O = methylarsonous acid + [thioredoxin]-disulfide + 3 glutathione + S-adenosyl-L-homocysteine + H(+). The enzyme catalyses arsenic triglutathione + 2 [thioredoxin]-dithiol + 2 S-adenosyl-L-methionine + H2O = dimethylarsinous acid + 2 [thioredoxin]-disulfide + 3 glutathione + 2 S-adenosyl-L-homocysteine + 2 H(+). It catalyses the reaction arsenic triglutathione + 3 [thioredoxin]-dithiol + 3 S-adenosyl-L-methionine = trimethylarsine + 3 [thioredoxin]-disulfide + 3 glutathione + 3 S-adenosyl-L-homocysteine + 3 H(+). In terms of biological role, catalyzes the transfer of a methyl group from AdoMet to trivalent arsenicals producing methylated and dimethylated arsenicals. It methylates arsenite to form methylarsonate, Me-AsO(3)H(2), which is reduced by methylarsonate reductase to methylarsonite, Me-As(OH)2. Methylarsonite is also a substrate and it is converted into the much less toxic compound dimethylarsinate (cacodylate), Me(2)As(O)-OH. The chain is Arsenite methyltransferase (As3mt) from Rattus norvegicus (Rat).